A 443-amino-acid chain; its full sequence is Putative transporter AmpG 1 (443 aa).

The next 12 helical transmembrane spans lie at histidine 6–glycine 26, isoleucine 43–phenylalanine 63, isoleucine 74–leucine 96, valine 106–alanine 128, glycine 144–leucine 164, lysine 172–serine 192, aspartate 255–proline 275, valine 300–methionine 320, leucine 326–leucine 346, isoleucine 355–isoleucine 375, leucine 394–valine 414, and phenylalanine 416–leucine 436.

It belongs to the major facilitator superfamily.

Its subcellular location is the cell inner membrane. This chain is Putative transporter AmpG 1 (ampG1), found in Rickettsia typhi (strain ATCC VR-144 / Wilmington).